Here is a 300-residue protein sequence, read N- to C-terminus: MQTDLSNSSLFNHKSVMTDEILYSIDQYPFISDNKLTAIDATLGGGGHSYQLLKKYPDLKIIGLDHDPIARESALNKLEEFKSRIEIIPSNFSNFEPKEKVSFVIADLGVNSNQIDSPERGFSFQKDGPLDMRMNPLIKMNAENLIETLSEKDLADLIFKFGDERLSRKISRKIKKDLKEKGKYSGTKDLAYSIAGCFPPKQRYRKIHPATRTFQALRIAVNNEIEALEKFLKIAPDWLLTGGIISIISFHSIEDRLVKNSFKGDYRLKNLTKKPITPNKKEIENNKRSRSAKLRIAQLK.

S-adenosyl-L-methionine-binding positions include 46 to 48 (GGH), Asp65, Phe92, Asp107, and Gln114.

This sequence belongs to the methyltransferase superfamily. RsmH family.

Its subcellular location is the cytoplasm. It carries out the reaction cytidine(1402) in 16S rRNA + S-adenosyl-L-methionine = N(4)-methylcytidine(1402) in 16S rRNA + S-adenosyl-L-homocysteine + H(+). In terms of biological role, specifically methylates the N4 position of cytidine in position 1402 (C1402) of 16S rRNA. This chain is Ribosomal RNA small subunit methyltransferase H, found in Prochlorococcus marinus (strain MIT 9515).